A 412-amino-acid chain; its full sequence is MANVADTKLYDILGVPPGASENELKKAYRKLAKEYHPDKNPNAGDKFKEISFAYEVLSNPEKRELYDRYGEQGLREGSGGGGGMDDIFSHIFGGGLFGFMGNQSRSRNGRRRGEDMMHPLKVSLEDLYNGKTTKLQLSKNVLCSACSGQGGKSGAVQKCSACRGRGVRIMIRQLAPGMVQQMQSVCSDCNGEGEVINEKDRCKKCEGKKVIKEVKILEVHVDKGMKHGQRITFTGEADQAPGVEPGDIVLLLQEKEHEVFQRDGNDLHMTYKIGLVEALCGFQFTFKHLDARQIVVKYPPGKVIEPGCVRVVRGEGMPQYRNPFEKGDLYIKFDVQFPENNWINPDKLSELEDLLPSRPEVPNVIGETEEVELQEFDSTRGSGGGQRREAYNDSSDEESSSHHGPGVQCAHQ.

The 63-residue stretch at Lys-8–Gly-70 folds into the J domain. Lys-39 carries the N6-acetyllysine modification. Residues Ser-78 and Ser-123 each carry the phosphoserine modification. A CR-type zinc finger spans residues Gly-130–Val-214. Lys-134 is covalently cross-linked (Glycyl lysine isopeptide (Lys-Gly) (interchain with G-Cter in SUMO2)). 2 residues coordinate Zn(2+): Cys-143 and Cys-146. Residues Cys-143–Gly-150 form a CXXCXGXG motif repeat. Lys-152 carries the N6-acetyllysine modification. The Zn(2+) site is built by Cys-159, Cys-162, Cys-186, Cys-189, Cys-202, and Cys-205. 3 CXXCXGXG motif repeats span residues Cys-159–Gly-166, Cys-186–Gly-193, and Cys-202–Lys-209. The tract at residues Ile-365–Gln-412 is disordered. Tyr-391 is modified (phosphotyrosine). 2 positions are modified to phosphoserine: Ser-394 and Ser-395. Residue Cys-409 is modified to Cysteine methyl ester. Cys-409 carries the S-farnesyl cysteine lipid modification. The propeptide at Ala-410–Gln-412 is removed in mature form.

The protein resides in the membrane. Its function is as follows. Co-chaperone of Hsc70. Stimulates ATP hydrolysis and the folding of unfolded proteins mediated by HSPA1A/B (in vitro). The chain is DnaJ homolog subfamily A member 2 (Dnaja2) from Mus musculus (Mouse).